A 412-amino-acid chain; its full sequence is Polyferredoxin protein MvhB (412 aa).

4Fe-4S ferredoxin-type domains are found at residues 2 to 29 (IIVNKEDCIRCGACQGTCPTAAIEVTPE), 30 to 57 (DVIYCDICGGEPKCVDICPTGALKLEDL), 67 to 96 (GRIVFNPDKCNECGDCVEVCPPQILKLDEG), 97 to 127 (KVKKVPLQGFCVMCQKCVDICPVGVIGVEGI), 138 to 166 (EGPIFIADCVGCGMCVPECPVDAITLDKV), 168 to 197 (GVIEIDEDTCIKCGVCAQTCPWNAVYISGR), 207 to 236 (KKFELDEDACIGCNTCVEACPGDFIVPRTS), 238 to 266 (LTVELPAICTACGLCEQLCPVDAIDLEVE), 276 to 305 (EGLVWDEEKCDFIGACANICPNDAIRVVTK), 314 to 345 (EKVDEEPSFAMCTRCGACTVACPKGALSLVDM), 357 to 386 (KRVQYNPALCDQCGDCIEACPYDMLKLTDE), and 385 to 412 (DEKVPLKGFCILCDQCIPACPKGALSLK). Positions 9, 12, 15, and 19 each coordinate [4Fe-4S] cluster. [4Fe-4S] cluster-binding residues include Cys76, Cys79, Cys82, Cys86, Cys107, Cys110, Cys113, Cys117, Cys146, Cys149, Cys152, Cys156, Cys177, Cys180, Cys183, Cys187, Cys216, Cys219, Cys222, Cys226, Cys246, Cys249, Cys252, and Cys256. [4Fe-4S] cluster is bound by residues Cys325, Cys328, Cys331, Cys335, Cys366, Cys369, Cys372, Cys376, Cys394, Cys397, Cys400, and Cys404.

It depends on [4Fe-4S] cluster as a cofactor.

The sequence is that of Polyferredoxin protein MvhB (mvhB) from Methanothermobacter thermautotrophicus (strain ATCC 29096 / DSM 1053 / JCM 10044 / NBRC 100330 / Delta H) (Methanobacterium thermoautotrophicum).